Here is a 334-residue protein sequence, read N- to C-terminus: Holliday junction branch migration complex subunit RuvB (334 aa).

The interval 1 to 182 is large ATPase domain (RuvB-L); the sequence is MNERMVDQSM…FGVHLRLEYY (182 aa). Residues Leu-21, Arg-22, Gly-63, Lys-66, Thr-67, Thr-68, 129-131, Arg-172, Tyr-182, and Arg-219 contribute to the ATP site; that span reads EDF. Residue Thr-67 participates in Mg(2+) binding. The interval 183–253 is small ATPAse domain (RuvB-S); the sequence is NESDLKEIII…TTKHALGLLQ (71 aa). The head domain (RuvB-H) stretch occupies residues 256-334; sequence QHGLDYIDHK…HFAKSNEERG (79 aa). Residues Arg-292, Arg-311, and Arg-316 each coordinate DNA.

This sequence belongs to the RuvB family. As to quaternary structure, homohexamer. Forms an RuvA(8)-RuvB(12)-Holliday junction (HJ) complex. HJ DNA is sandwiched between 2 RuvA tetramers; dsDNA enters through RuvA and exits via RuvB. An RuvB hexamer assembles on each DNA strand where it exits the tetramer. Each RuvB hexamer is contacted by two RuvA subunits (via domain III) on 2 adjacent RuvB subunits; this complex drives branch migration. In the full resolvosome a probable DNA-RuvA(4)-RuvB(12)-RuvC(2) complex forms which resolves the HJ.

It is found in the cytoplasm. The enzyme catalyses ATP + H2O = ADP + phosphate + H(+). Functionally, the RuvA-RuvB-RuvC complex processes Holliday junction (HJ) DNA during genetic recombination and DNA repair, while the RuvA-RuvB complex plays an important role in the rescue of blocked DNA replication forks via replication fork reversal (RFR). RuvA specifically binds to HJ cruciform DNA, conferring on it an open structure. The RuvB hexamer acts as an ATP-dependent pump, pulling dsDNA into and through the RuvAB complex. RuvB forms 2 homohexamers on either side of HJ DNA bound by 1 or 2 RuvA tetramers; 4 subunits per hexamer contact DNA at a time. Coordinated motions by a converter formed by DNA-disengaged RuvB subunits stimulates ATP hydrolysis and nucleotide exchange. Immobilization of the converter enables RuvB to convert the ATP-contained energy into a lever motion, pulling 2 nucleotides of DNA out of the RuvA tetramer per ATP hydrolyzed, thus driving DNA branch migration. The RuvB motors rotate together with the DNA substrate, which together with the progressing nucleotide cycle form the mechanistic basis for DNA recombination by continuous HJ branch migration. Branch migration allows RuvC to scan DNA until it finds its consensus sequence, where it cleaves and resolves cruciform DNA. The sequence is that of Holliday junction branch migration complex subunit RuvB from Staphylococcus aureus (strain N315).